We begin with the raw amino-acid sequence, 689 residues long: Glycine--tRNA ligase beta subunit (689 aa).

Belongs to the class-II aminoacyl-tRNA synthetase family. As to quaternary structure, tetramer of two alpha and two beta subunits.

It localises to the cytoplasm. The enzyme catalyses tRNA(Gly) + glycine + ATP = glycyl-tRNA(Gly) + AMP + diphosphate. The polypeptide is Glycine--tRNA ligase beta subunit (Klebsiella pneumoniae (strain 342)).